We begin with the raw amino-acid sequence, 374 residues long: Speckle-type POZ protein A (374 aa).

The MATH domain occupies 31–161; sequence KFSYMWTINN…DDKLTLFCEV (131 aa). The tract at residues 71-191 is required for nuclear localization; the sequence is VNPKGLDEES…PECRLADELG (121 aa). A BTB domain is found at 173-297; it reads QNTMNMVKVP…MCEEALCSNL (125 aa). A homodimerization region spans residues 297–355; sequence LSVENAAEILILADLHSADQLKTQAVDFINYHASDVMETSGWKSMVVSHPHLVAEAYRS.

Belongs to the Tdpoz family. As to quaternary structure, homodimer. Part of cullin-RING-based BCR (BTB-CUL3-RBX1) E3 ubiquitin-protein ligase complexes that contain CUL3 and SPOP, plus a target protein.

It localises to the nucleus. It is found in the nucleus speckle. It functions in the pathway protein modification; protein ubiquitination. In terms of biological role, component of a cullin-RING-based BCR (BTB-CUL3-RBX1) E3 ubiquitin-protein ligase complex that mediates the ubiquitination of target proteins, leading most often to their proteasomal degradation. This Xenopus laevis (African clawed frog) protein is Speckle-type POZ protein A (spop-a).